The primary structure comprises 129 residues: Lysozyme C (129 aa).

Residues 1-129 (KVYGRCELAA…VNAWIRGCRL (129 aa)) form the C-type lysozyme domain. 4 cysteine pairs are disulfide-bonded: C6–C127, C30–C115, C64–C80, and C76–C94. Residues E35 and D52 contribute to the active site.

Belongs to the glycosyl hydrolase 22 family. As to quaternary structure, monomer.

The protein localises to the secreted. The enzyme catalyses Hydrolysis of (1-&gt;4)-beta-linkages between N-acetylmuramic acid and N-acetyl-D-glucosamine residues in a peptidoglycan and between N-acetyl-D-glucosamine residues in chitodextrins.. Functionally, lysozymes have primarily a bacteriolytic function; those in tissues and body fluids are associated with the monocyte-macrophage system and enhance the activity of immunoagents. The polypeptide is Lysozyme C (LYZ) (Syrmaticus reevesii (Reeves's pheasant)).